Consider the following 141-residue polypeptide: Large ribosomal subunit protein uL11 (141 aa).

It belongs to the universal ribosomal protein uL11 family. As to quaternary structure, part of the ribosomal stalk of the 50S ribosomal subunit. Interacts with L10 and the large rRNA to form the base of the stalk. L10 forms an elongated spine to which L12 dimers bind in a sequential fashion forming a multimeric L10(L12)X complex. One or more lysine residues are methylated.

In terms of biological role, forms part of the ribosomal stalk which helps the ribosome interact with GTP-bound translation factors. In Aster yellows witches'-broom phytoplasma (strain AYWB), this protein is Large ribosomal subunit protein uL11.